The following is a 450-amino-acid chain: Exodeoxyribonuclease 7 large subunit (450 aa).

It belongs to the XseA family. In terms of assembly, heterooligomer composed of large and small subunits.

Its subcellular location is the cytoplasm. The catalysed reaction is Exonucleolytic cleavage in either 5'- to 3'- or 3'- to 5'-direction to yield nucleoside 5'-phosphates.. In terms of biological role, bidirectionally degrades single-stranded DNA into large acid-insoluble oligonucleotides, which are then degraded further into small acid-soluble oligonucleotides. The protein is Exodeoxyribonuclease 7 large subunit of Listeria welshimeri serovar 6b (strain ATCC 35897 / DSM 20650 / CCUG 15529 / CIP 8149 / NCTC 11857 / SLCC 5334 / V8).